The chain runs to 432 residues: Adenylosuccinate lyase (432 aa).

Residues Arg4–Tyr5, Arg67–Asp69, and Thr93–Ser94 each bind N(6)-(1,2-dicarboxyethyl)-AMP. Residue His141 is the Proton donor/acceptor of the active site. Residue Gln212 participates in N(6)-(1,2-dicarboxyethyl)-AMP binding. Catalysis depends on Ser262, which acts as the Proton donor/acceptor. Residues Ser263, Lys268 to Asn270, Asn276, and Ser307 to Ile311 contribute to the N(6)-(1,2-dicarboxyethyl)-AMP site.

Belongs to the lyase 1 family. Adenylosuccinate lyase subfamily. Homodimer and homotetramer. Residues from neighboring subunits contribute catalytic and substrate-binding residues to each active site.

It carries out the reaction N(6)-(1,2-dicarboxyethyl)-AMP = fumarate + AMP. It catalyses the reaction (2S)-2-[5-amino-1-(5-phospho-beta-D-ribosyl)imidazole-4-carboxamido]succinate = 5-amino-1-(5-phospho-beta-D-ribosyl)imidazole-4-carboxamide + fumarate. Its pathway is purine metabolism; AMP biosynthesis via de novo pathway; AMP from IMP: step 2/2. It functions in the pathway purine metabolism; IMP biosynthesis via de novo pathway; 5-amino-1-(5-phospho-D-ribosyl)imidazole-4-carboxamide from 5-amino-1-(5-phospho-D-ribosyl)imidazole-4-carboxylate: step 2/2. Catalyzes two reactions in de novo purine nucleotide biosynthesis. Catalyzes the breakdown of 5-aminoimidazole- (N-succinylocarboxamide) ribotide (SAICAR or 2-[5-amino-1-(5-phospho-beta-D-ribosyl)imidazole-4-carboxamido]succinate) to 5-aminoimidazole-4-carboxamide ribotide (AICAR or 5-amino-1-(5-phospho-beta-D-ribosyl)imidazole-4-carboxamide) and fumarate, and of adenylosuccinate (ADS or N(6)-(1,2-dicarboxyethyl)-AMP) to adenosine monophosphate (AMP) and fumarate. The polypeptide is Adenylosuccinate lyase (purB) (Streptococcus mutans serotype c (strain ATCC 700610 / UA159)).